We begin with the raw amino-acid sequence, 1116 residues long: Electrogenic sodium bicarbonate cotransporter 4 (1116 aa).

A compositionally biased stretch (basic and acidic residues) spans 1-14 (MKVDEEKAGVKKLD). 3 disordered regions span residues 1–92 (MKVD…TRSP), 222–257 (PIHRSLADIGKSVSTTNRSSARSSSAGPTLHRSTED), and 431–467 (PGQMNGSVGGGGASAGGGGSGGGAGGSGAGGVGSGDE). The Cytoplasmic segment spans residues 1–515 (MKVDEEKAGV…YDGFHLQSIS (515 aa)). Over residues 233-247 (SVSTTNRSSARSSSA) the composition is skewed to low complexity. A compositionally biased stretch (gly residues) spans 437 to 464 (SVGGGGASAGGGGSGGGAGGSGAGGVGS). A helical membrane pass occupies residues 516–536 (AVLFIYLGCITNAITFGGLLG). The Extracellular portion of the chain corresponds to 537 to 558 (DATDNYQGVMESFLGTAMAGSL). A helical transmembrane segment spans residues 559–579 (FCLFSGQPLIILSSTGPILIF). Residues 580-600 (EKLLFDFSKANGLDYMEFRLW) lie on the Cytoplasmic side of the membrane. A helical membrane pass occupies residues 601 to 621 (IGLHSAIQCLILVATDASFII). The Extracellular portion of the chain corresponds to 622-631 (KYITRFTEEG). The chain crosses the membrane as a helical span at residues 632 to 652 (FSTLISFIFIYDAIKKMIGAF). Topologically, residues 653-730 (KYYPINTDFK…GGRLLGSSCQ (78 aa)) are cytoplasmic. A helical membrane pass occupies residues 731–751 (FVPDLALMSFILFFGTYSMTL). The Extracellular portion of the chain corresponds to 752 to 768 (TLKKFKFSRYFPTKVRT). The helical transmembrane segment at 769–789 (LVADFSIVFSILLFCGIDACF) threads the bilayer. The Cytoplasmic segment spans residues 790–819 (GLQTPKLHVPSVIKPTRPDRGWFVAPFGKN). Residues 820–840 (PWWVYPASILPALLVTILIFM) form a helical membrane-spanning segment. Residues 841-865 (DQQITAVIVNRKENKLRKAAGYHLD) are Extracellular-facing. Residues 866-886 (LFWVGILMALCSFTGLPWYVA) traverse the membrane as a helical segment. The Cytoplasmic segment spans residues 887–922 (ATVISIAHIDSLKMETETSAPGEQPQFLGVREQRVT). A helical membrane pass occupies residues 923-943 (GVMVFILTGISVFLAPILKYI). Residues 944-945 (PM) lie on the Extracellular side of the membrane. The helical transmembrane segment at 946 to 966 (PVLYGVFLYMGVASLNGIQFW) threads the bilayer. Residues 967 to 987 (ERCKLFLMPAKHQPDHAFLRH) are Cytoplasmic-facing. The next 2 helical transmembrane spans lie at 988-1008 (VPLRRIHLFTLVQILCLALLW) and 1009-1029 (ILKSTMAAIIFPVMILGLIIV). The Cytoplasmic portion of the chain corresponds to 1030–1116 (RRLLDLIFSQ…KRSSSWSYSL (87 aa)).

This sequence belongs to the anion exchanger (TC 2.A.31) family.

It localises to the apical cell membrane. The protein resides in the basolateral cell membrane. The catalysed reaction is 2 hydrogencarbonate(out) + Na(+)(out) = 2 hydrogencarbonate(in) + Na(+)(in). It carries out the reaction 3 hydrogencarbonate(out) + Na(+)(out) = 3 hydrogencarbonate(in) + Na(+)(in). In terms of biological role, mediates sodium- and bicarbonate-dependent electrogenic sodium bicarbonate cotransport, with a Na(+):HCO3(-) stoichiometry varying from 1:2 to 1:3. The sequence is that of Electrogenic sodium bicarbonate cotransporter 4 (Slc4a5) from Mus musculus (Mouse).